The following is a 387-amino-acid chain: MVHCSCVLFRKYGNFIDKLRLFTRGGSGGMGYPRLGGEGGKGGDVWVVAQNRMTLKQLKDRYPRKRFVAGVGANSKISALKGSKGKDCEIPVPVGISVTDENGKIIGELNKENDRILVAQGGLGGKLLTNFLPLKGQKRIIHLDLKLIADVGLVGFPNAGKSSLLSCVSHAKPAIADYAFTTLKPELGKIMYSDFKQISVADLPGLIEGAHMNKGMGHKFLKHIERTRQLLFVVDISGFQLSSHTQYRTAFETIILLTKELELYKEELQTKPALLAVNKMDLPDAQDKFHELMSQLQNPKDFLHLFEKNMIPERTVEFQHIIPISAVTGEGIEELKNCIRKSLDEQANQENDALHKKQLLNLWISDTMSSTEPPSKHAVTTSKMDII.

One can recognise an Obg domain in the interval 13-148; sequence GNFIDKLRLF…RIIHLDLKLI (136 aa). Positions 149–344 constitute an OBG-type G domain; that stretch reads ADVGLVGFPN…LKNCIRKSLD (196 aa). Residues 155–162, 202–206, and 278–281 each bind GTP; these read GFPNAGKS, DLPGL, and NKMD.

The protein belongs to the TRAFAC class OBG-HflX-like GTPase superfamily. OBG GTPase family.

Its subcellular location is the nucleus. The protein resides in the nucleolus. It localises to the chromosome. May be involved in the ribosome maturation process. Complements an ObgE(CgtA) function in E.coli ribosome maturation. Plays a role of GTPase in vitro. When missing, disorganization of the nucleolar architecture is observed. The polypeptide is GTP-binding protein 10 (GTPBP10) (Homo sapiens (Human)).